The sequence spans 429 residues: Phosphomethylpyrimidine synthase (429 aa).

Residues Asn-66, Met-95, Tyr-124, His-163, 185 to 187, 226 to 229, and Glu-265 each bind substrate; these read SRG and DGLR. His-269 serves as a coordination point for Zn(2+). Position 292 (Tyr-292) interacts with substrate. His-333 contributes to the Zn(2+) binding site. The [4Fe-4S] cluster site is built by Cys-407, Cys-410, and Cys-414.

This sequence belongs to the ThiC family. [4Fe-4S] cluster serves as cofactor.

It catalyses the reaction 5-amino-1-(5-phospho-beta-D-ribosyl)imidazole + S-adenosyl-L-methionine = 4-amino-2-methyl-5-(phosphooxymethyl)pyrimidine + CO + 5'-deoxyadenosine + formate + L-methionine + 3 H(+). The protein operates within cofactor biosynthesis; thiamine diphosphate biosynthesis. Functionally, catalyzes the synthesis of the hydroxymethylpyrimidine phosphate (HMP-P) moiety of thiamine from aminoimidazole ribotide (AIR) in a radical S-adenosyl-L-methionine (SAM)-dependent reaction. This is Phosphomethylpyrimidine synthase from Pyrococcus abyssi (strain GE5 / Orsay).